The chain runs to 530 residues: Calcium-dependent protein kinase 14 (530 aa).

A lipid anchor (N-myristoyl glycine) is attached at Gly-2. The 259-residue stretch at 54 to 312 (YKLGRELGRG…AQQVLDHPWI (259 aa)) folds into the Protein kinase domain. ATP is bound by residues 60–68 (LGRGEFGVT) and Lys-83. Asp-178 acts as the Proton acceptor in catalysis. Ser-218 carries the post-translational modification Phosphoserine. The autoinhibitory domain stretch occupies residues 318-348 (ASNVSLGETVRARLKQFSVMNKLKKRALRVI). EF-hand domains follow at residues 355 to 390 (EETS…LGIV), 391 to 426 (VPQD…IRKL), 427 to 462 (GNDE…DVDT), and 463 to 498 (TSEE…GTDW). The Ca(2+) site is built by Asp-368, Ser-370, Lys-374, Glu-379, Asp-404, Asp-406, Asp-408, Tyr-410, Glu-415, Asp-440, Asn-442, Ser-444, Tyr-446, Glu-451, Asp-476, Asn-478, Asp-480, and Lys-482. Ser-484 is subject to Phosphoserine. Residue Glu-487 coordinates Ca(2+).

The protein belongs to the protein kinase superfamily. Ser/Thr protein kinase family. CDPK subfamily.

The protein localises to the membrane. The catalysed reaction is L-seryl-[protein] + ATP = O-phospho-L-seryl-[protein] + ADP + H(+). The enzyme catalyses L-threonyl-[protein] + ATP = O-phospho-L-threonyl-[protein] + ADP + H(+). With respect to regulation, activated by calcium. Autophosphorylation may play an important role in the regulation of the kinase activity. In terms of biological role, may play a role in signal transduction pathways that involve calcium as a second messenger. The protein is Calcium-dependent protein kinase 14 (CPK14) of Arabidopsis thaliana (Mouse-ear cress).